The sequence spans 352 residues: Probable dual-specificity RNA methyltransferase RlmN (352 aa).

The Proton acceptor role is filled by E99. One can recognise a Radical SAM core domain in the interval 105 to 325; that stretch reads EGDRATLCIS…ESHGYTCTIR (221 aa). Cysteines 112 and 336 form a disulfide. The [4Fe-4S] cluster site is built by C119, C123, and C126. Residues 164 to 165, S196, 217 to 219, and H293 each bind S-adenosyl-L-methionine; these read GE and SLH. Residue C336 is the S-methylcysteine intermediate of the active site.

It belongs to the radical SAM superfamily. RlmN family. It depends on [4Fe-4S] cluster as a cofactor.

Its subcellular location is the cytoplasm. The enzyme catalyses adenosine(2503) in 23S rRNA + 2 reduced [2Fe-2S]-[ferredoxin] + 2 S-adenosyl-L-methionine = 2-methyladenosine(2503) in 23S rRNA + 5'-deoxyadenosine + L-methionine + 2 oxidized [2Fe-2S]-[ferredoxin] + S-adenosyl-L-homocysteine. It carries out the reaction adenosine(37) in tRNA + 2 reduced [2Fe-2S]-[ferredoxin] + 2 S-adenosyl-L-methionine = 2-methyladenosine(37) in tRNA + 5'-deoxyadenosine + L-methionine + 2 oxidized [2Fe-2S]-[ferredoxin] + S-adenosyl-L-homocysteine. In terms of biological role, specifically methylates position 2 of adenine 2503 in 23S rRNA and position 2 of adenine 37 in tRNAs. This Porphyromonas gingivalis (strain ATCC 33277 / DSM 20709 / CIP 103683 / JCM 12257 / NCTC 11834 / 2561) protein is Probable dual-specificity RNA methyltransferase RlmN.